A 448-amino-acid polypeptide reads, in one-letter code: Asparagine--tRNA ligase (448 aa).

This sequence belongs to the class-II aminoacyl-tRNA synthetase family. In terms of assembly, homodimer.

The protein resides in the cytoplasm. The enzyme catalyses tRNA(Asn) + L-asparagine + ATP = L-asparaginyl-tRNA(Asn) + AMP + diphosphate + H(+). In Streptococcus pyogenes serotype M12 (strain MGAS9429), this protein is Asparagine--tRNA ligase.